A 72-amino-acid chain; its full sequence is Protein P13 (72 aa).

Its subcellular location is the virion membrane. In Pseudomonas phage phi6 (Bacteriophage phi-6), this protein is Protein P13 (P13).